The following is a 215-amino-acid chain: GTP-binding protein YPT6 (215 aa).

17-24 contacts GTP; it reads GEQGVGKT. The Effector region motif lies at 39 to 47; it reads YQATIGIDF. Residues 65–69 and 124–127 contribute to the GTP site; these read DTAGQ and NKSD. Residues 178 to 196 show a composition bias toward polar residues; sequence NSESTPLDSENANSANQNK. The tract at residues 178 to 215 is disordered; sequence NSESTPLDSENANSANQNKPGVIDISTAEEQEQSACQC. S-geranylgeranyl cysteine attachment occurs at residues cysteine 213 and cysteine 215. Cysteine 215 is subject to Cysteine methyl ester.

The protein belongs to the small GTPase superfamily. Rab family. As to quaternary structure, interacts with YIF1, YIP3 and YIP4.

It is found in the cell membrane. In terms of biological role, protein transport. Might participate in post-Golgi transport. This chain is GTP-binding protein YPT6 (YPT6), found in Saccharomyces cerevisiae (strain ATCC 204508 / S288c) (Baker's yeast).